The chain runs to 260 residues: Thiazole synthase (260 aa).

The active-site Schiff-base intermediate with DXP is the K102. 1-deoxy-D-xylulose 5-phosphate-binding positions include G163, 189-190 (AG), and 211-212 (NT).

It belongs to the ThiG family. Homotetramer. Forms heterodimers with either ThiH or ThiS.

It localises to the cytoplasm. The enzyme catalyses [ThiS sulfur-carrier protein]-C-terminal-Gly-aminoethanethioate + 2-iminoacetate + 1-deoxy-D-xylulose 5-phosphate = [ThiS sulfur-carrier protein]-C-terminal Gly-Gly + 2-[(2R,5Z)-2-carboxy-4-methylthiazol-5(2H)-ylidene]ethyl phosphate + 2 H2O + H(+). It participates in cofactor biosynthesis; thiamine diphosphate biosynthesis. Catalyzes the rearrangement of 1-deoxy-D-xylulose 5-phosphate (DXP) to produce the thiazole phosphate moiety of thiamine. Sulfur is provided by the thiocarboxylate moiety of the carrier protein ThiS. In vitro, sulfur can be provided by H(2)S. The chain is Thiazole synthase from Citrifermentans bemidjiense (strain ATCC BAA-1014 / DSM 16622 / JCM 12645 / Bem) (Geobacter bemidjiensis).